Consider the following 373-residue polypeptide: Gametogenetin-binding protein 1 (373 aa).

Disordered stretches follow at residues 26 to 113 (VGSK…GSQT) and 237 to 268 (KAQR…AVDE). A compositionally biased stretch (polar residues) spans 36–49 (NRPLNRSQPSSSPE). Positions 226 to 373 (LYKQLQKSAM…DEMGNWPPPE (148 aa)) are required for induction of mitochondrial fragmentation. Basic and acidic residues predominate over residues 254–263 (SPTEERGERE). Residues 301-373 (KTFRSTDTVG…DEMGNWPPPE (73 aa)) form an interaction with GGN region.

In terms of assembly, interacts with CCDC159. Interacts with GGN.

It is found in the cytoplasm. The protein localises to the membrane. The protein resides in the golgi apparatus. It localises to the mitochondrion intermembrane space. In terms of biological role, induces mitochondrial fragmentation, possibly by promoting DNM1L-dependent fission and may play a role in mitochondrial morphogenesis during spermatogenesis. The chain is Gametogenetin-binding protein 1 (Ggnbp1) from Rattus norvegicus (Rat).